The primary structure comprises 400 residues: NADH-quinone oxidoreductase subunit D (400 aa).

This sequence belongs to the complex I 49 kDa subunit family. In terms of assembly, NDH-1 is composed of 14 different subunits. Subunits NuoB, C, D, E, F, and G constitute the peripheral sector of the complex.

Its subcellular location is the cell inner membrane. It catalyses the reaction a quinone + NADH + 5 H(+)(in) = a quinol + NAD(+) + 4 H(+)(out). In terms of biological role, NDH-1 shuttles electrons from NADH, via FMN and iron-sulfur (Fe-S) centers, to quinones in the respiratory chain. The immediate electron acceptor for the enzyme in this species is believed to be a menaquinone. Couples the redox reaction to proton translocation (for every two electrons transferred, four hydrogen ions are translocated across the cytoplasmic membrane), and thus conserves the redox energy in a proton gradient. This chain is NADH-quinone oxidoreductase subunit D, found in Chlorobium chlorochromatii (strain CaD3).